The chain runs to 143 residues: uncharacterized protein (143 aa).

Positions 1-21 (MAAMDTGQRADPSNPGDKEGD) are disordered.

This is an uncharacterized protein from Homo sapiens (Human).